Here is a 132-residue protein sequence, read N- to C-terminus: Small ribosomal subunit protein uS8 (132 aa).

This sequence belongs to the universal ribosomal protein uS8 family. Part of the 30S ribosomal subunit. Contacts proteins S5 and S12.

Functionally, one of the primary rRNA binding proteins, it binds directly to 16S rRNA central domain where it helps coordinate assembly of the platform of the 30S subunit. The chain is Small ribosomal subunit protein uS8 from Corynebacterium efficiens (strain DSM 44549 / YS-314 / AJ 12310 / JCM 11189 / NBRC 100395).